Reading from the N-terminus, the 281-residue chain is 2,3,4,5-tetrahydropyridine-2,6-dicarboxylate N-succinyltransferase (281 aa).

Residues Arg-108 and Asp-145 each contribute to the substrate site.

It belongs to the transferase hexapeptide repeat family. Homotrimer.

The protein localises to the cytoplasm. The catalysed reaction is (S)-2,3,4,5-tetrahydrodipicolinate + succinyl-CoA + H2O = (S)-2-succinylamino-6-oxoheptanedioate + CoA. It participates in amino-acid biosynthesis; L-lysine biosynthesis via DAP pathway; LL-2,6-diaminopimelate from (S)-tetrahydrodipicolinate (succinylase route): step 1/3. This is 2,3,4,5-tetrahydropyridine-2,6-dicarboxylate N-succinyltransferase from Bradyrhizobium diazoefficiens (strain JCM 10833 / BCRC 13528 / IAM 13628 / NBRC 14792 / USDA 110).